Here is a 523-residue protein sequence, read N- to C-terminus: AarF domain-containing protein kinase 1 (523 aa).

Residues 148-484 (EFEEKPLGAA…SLWSYIHISL (337 aa)) enclose the Protein kinase domain. ATP contacts are provided by residues 154 to 162 (LGAASLAQV) and K176. Catalysis depends on D308, which acts as the Proton acceptor.

It belongs to the protein kinase superfamily. ADCK protein kinase family.

It localises to the mitochondrion. Its function is as follows. Appears to be essential for maintaining mitochondrial cristae formation and mitochondrial function by acting via YME1L1 in a kinase-independent manner to regulate essential mitochondrial structural proteins OPA1 and IMMT. The action of this enzyme is not yet clear. It is not known if it has protein kinase activity and what type of substrate it would phosphorylate (Ser, Thr or Tyr). In Xenopus tropicalis (Western clawed frog), this protein is AarF domain-containing protein kinase 1 (adck1).